We begin with the raw amino-acid sequence, 432 residues long: Adenylosuccinate synthetase (432 aa).

GTP contacts are provided by residues 13-19 (GDEGKGK) and 41-43 (GHT). The active-site Proton acceptor is the Asp-14. Mg(2+) contacts are provided by Asp-14 and Gly-41. IMP contacts are provided by residues 14-17 (DEGK), 39-42 (NAGH), Thr-130, Arg-144, Gln-225, Thr-240, and Arg-304. Catalysis depends on His-42, which acts as the Proton donor. 300 to 306 (ATTGRRR) serves as a coordination point for substrate. GTP is bound by residues Arg-306, 332–334 (KLD), and 415–417 (STG).

The protein belongs to the adenylosuccinate synthetase family. Homodimer. The cofactor is Mg(2+).

The protein localises to the cytoplasm. The enzyme catalyses IMP + L-aspartate + GTP = N(6)-(1,2-dicarboxyethyl)-AMP + GDP + phosphate + 2 H(+). It participates in purine metabolism; AMP biosynthesis via de novo pathway; AMP from IMP: step 1/2. Functionally, plays an important role in the de novo pathway of purine nucleotide biosynthesis. Catalyzes the first committed step in the biosynthesis of AMP from IMP. This chain is Adenylosuccinate synthetase, found in Shigella sonnei (strain Ss046).